Here is a 111-residue protein sequence, read N- to C-terminus: UPF0060 membrane protein xcc-b100_1273 (111 aa).

4 consecutive transmembrane segments (helical) span residues 8–28, 34–54, 62–82, and 91–111; these read LLLF…PYLW, SVWL…LLTL, VYAA…WWVD, and LLGA…PRSG.

The protein belongs to the UPF0060 family.

The protein localises to the cell inner membrane. This is UPF0060 membrane protein xcc-b100_1273 from Xanthomonas campestris pv. campestris (strain B100).